The primary structure comprises 350 residues: Xylene/toluene monooxygenase electron transfer component XylA (350 aa).

The 2Fe-2S ferredoxin-type domain maps to 16–108; the sequence is PESTVSVRGQ…DLEIELDTVL (93 aa). [2Fe-2S] cluster is bound by residues cysteine 52, cysteine 57, cysteine 60, and cysteine 92. Residues 109-350 form a ferredoxin--NADH reductase region; that stretch reads GQALVPIETS…ADRFYNRPPC (242 aa). The 100-residue stretch at 114–213 folds into the FAD-binding FR-type domain; it reads PIETSALISK…RAPYGQFGLH (100 aa).

Belongs to the bacterial ring-hydroxylating dioxygenase ferredoxin reductase family. Monomer. The xylene/toluene monooxygenase is composed of two subunits: the electron transfer component XylA and the hydroxylase component XylM. FAD is required as a cofactor. [2Fe-2S] cluster serves as cofactor.

Its subcellular location is the cell inner membrane. The enzyme catalyses 2 reduced [2Fe-2S]-[ferredoxin] + NAD(+) + H(+) = 2 oxidized [2Fe-2S]-[ferredoxin] + NADH. The reductase activity is completely inhibited by quercetin (a common inhibitor of mammalian oxidoreductases) and p-chloromercuribenzoate, but not by iodoacetimide, N-ethylmaleimide and pyrrazole. In terms of biological role, component of a monooxygenase that catalyzes the first step in the degradation of xylenes and toluenes. XylA is responsible for the transport of electrons from the electron donor NADH to the terminal hydroxylase component, XylM. The sequence is that of Xylene/toluene monooxygenase electron transfer component XylA from Pseudomonas putida (Arthrobacter siderocapsulatus).